The following is a 297-amino-acid chain: Protein-L-isoaspartate O-methyltransferase (297 aa).

Positions 20–57 (RKPAPARTAGMPAVGAPGPAQAQAKARDKQPSAPTAAA) are disordered. Residues 28 to 43 (AGMPAVGAPGPAQAQA) show a composition bias toward low complexity. S133 is a catalytic residue.

Belongs to the methyltransferase superfamily. L-isoaspartyl/D-aspartyl protein methyltransferase family.

It is found in the cytoplasm. It catalyses the reaction [protein]-L-isoaspartate + S-adenosyl-L-methionine = [protein]-L-isoaspartate alpha-methyl ester + S-adenosyl-L-homocysteine. In terms of biological role, catalyzes the methyl esterification of L-isoaspartyl residues in peptides and proteins that result from spontaneous decomposition of normal L-aspartyl and L-asparaginyl residues. It plays a role in the repair and/or degradation of damaged proteins. In Cupriavidus pinatubonensis (strain JMP 134 / LMG 1197) (Cupriavidus necator (strain JMP 134)), this protein is Protein-L-isoaspartate O-methyltransferase.